We begin with the raw amino-acid sequence, 409 residues long: Tryptophan synthase beta chain (409 aa).

An N6-(pyridoxal phosphate)lysine modification is found at Lys98.

Belongs to the TrpB family. As to quaternary structure, tetramer of two alpha and two beta chains. Pyridoxal 5'-phosphate serves as cofactor.

The enzyme catalyses (1S,2R)-1-C-(indol-3-yl)glycerol 3-phosphate + L-serine = D-glyceraldehyde 3-phosphate + L-tryptophan + H2O. It participates in amino-acid biosynthesis; L-tryptophan biosynthesis; L-tryptophan from chorismate: step 5/5. Functionally, the beta subunit is responsible for the synthesis of L-tryptophan from indole and L-serine. In Jannaschia sp. (strain CCS1), this protein is Tryptophan synthase beta chain.